The sequence spans 483 residues: Argininosuccinate lyase (483 aa).

It belongs to the lyase 1 family. Argininosuccinate lyase subfamily.

The protein resides in the cytoplasm. The catalysed reaction is 2-(N(omega)-L-arginino)succinate = fumarate + L-arginine. It functions in the pathway amino-acid biosynthesis; L-arginine biosynthesis; L-arginine from L-ornithine and carbamoyl phosphate: step 3/3. This Archaeoglobus fulgidus (strain ATCC 49558 / DSM 4304 / JCM 9628 / NBRC 100126 / VC-16) protein is Argininosuccinate lyase.